Here is a 102-residue protein sequence, read N- to C-terminus: Small ribosomal subunit protein uS10 (102 aa).

It belongs to the universal ribosomal protein uS10 family. As to quaternary structure, part of the 30S ribosomal subunit.

In terms of biological role, involved in the binding of tRNA to the ribosomes. This is Small ribosomal subunit protein uS10 from Lacticaseibacillus casei (strain BL23) (Lactobacillus casei).